We begin with the raw amino-acid sequence, 1744 residues long: Tanabin (1744 aa).

Residues methionine 1–glutamate 12 are head. Positions valine 8–leucine 48 are coil 1A. The 308-residue stretch at glutamate 13–isoleucine 320 folds into the IF rod domain. The linker 1 stretch occupies residues arginine 49 to lysine 60. The segment at histidine 61 to methionine 156 is coil 1B. The segment at glutamate 157–proline 179 is linker 12. The interval valine 180 to tryptophan 193 is coil 2A. Residues glutamine 194–glutamate 199 form a linker 2 region. The coil 2B stretch occupies residues tyrosine 200–glutamate 314. The tail stretch occupies residues alanine 315–phenylalanine 1744. Composition is skewed to basic and acidic residues over residues arginine 341–leucine 371 and histidine 785–serine 815. Disordered regions lie at residues arginine 341–glutamine 372, histidine 785–glutamate 816, glutamate 976–glutamate 996, serine 1032–aspartate 1093, aspartate 1340–valine 1470, serine 1485–asparagine 1506, and alanine 1560–histidine 1722. The span at leucine 980–glycine 990 shows a compositional bias: polar residues. The segment covering glutamate 1034–glutamine 1056 has biased composition (acidic residues). Positions valine 1074–glutamate 1086 are enriched in basic and acidic residues. The segment covering aspartate 1340 to glutamine 1351 has biased composition (acidic residues). The segment covering glutamate 1352–asparagine 1367 has biased composition (basic and acidic residues). Residues glutamate 1368–aspartate 1377 show a composition bias toward acidic residues. The segment covering histidine 1386 to glutamine 1398 has biased composition (basic and acidic residues). Positions leucine 1412 to glutamate 1421 are enriched in acidic residues. A compositionally biased stretch (basic and acidic residues) spans proline 1423–asparagine 1432. The span at aspartate 1433–threonine 1442 shows a compositional bias: polar residues. Positions aspartate 1445–glutamate 1460 are enriched in basic and acidic residues. Residues aspartate 1496–glutamate 1505 are compositionally biased toward acidic residues. Composition is skewed to polar residues over residues glutamate 1576 to proline 1586, glutamate 1597 to serine 1621, and serine 1629 to threonine 1639. A compositionally biased stretch (acidic residues) spans arginine 1680 to serine 1691. Over residues asparagine 1698–valine 1709 the composition is skewed to basic and acidic residues.

It belongs to the intermediate filament family. In terms of tissue distribution, growth cones of embryonic vertebrate neurons.

This is Tanabin from Xenopus laevis (African clawed frog).